We begin with the raw amino-acid sequence, 204 residues long: Putative uracil phosphoribosyltransferase urg2 (204 aa).

Residues Arg75, Arg100, and 126 to 134 (DPVMATGGT) each bind 5-phospho-alpha-D-ribose 1-diphosphate. Position 187 (Tyr187) interacts with D-ribose 5-phosphate. Uracil contacts are provided by residues Leu188 and 193–195 (GDI). Asp194 provides a ligand contact to 5-phospho-alpha-D-ribose 1-diphosphate.

The protein belongs to the UPRTase family. Mg(2+) is required as a cofactor.

It localises to the cytoplasm. It is found in the nucleus. It catalyses the reaction UMP + diphosphate = 5-phospho-alpha-D-ribose 1-diphosphate + uracil. The protein operates within pyrimidine metabolism; UMP biosynthesis via salvage pathway; UMP from uracil: step 1/1. Allosterically activated by GTP. Functionally, catalyzes the conversion of uracil and 5-phospho-alpha-D-ribose 1-diphosphate (PRPP) to UMP and diphosphate. This chain is Putative uracil phosphoribosyltransferase urg2, found in Schizosaccharomyces pombe (strain 972 / ATCC 24843) (Fission yeast).